We begin with the raw amino-acid sequence, 318 residues long: Ribonuclease Z (318 aa).

Residues His63, His65, Asp67, His68, His142, Asp210, and His268 each contribute to the Zn(2+) site. Asp67 (proton acceptor) is an active-site residue.

It belongs to the RNase Z family. As to quaternary structure, homodimer. Zn(2+) serves as cofactor.

The enzyme catalyses Endonucleolytic cleavage of RNA, removing extra 3' nucleotides from tRNA precursor, generating 3' termini of tRNAs. A 3'-hydroxy group is left at the tRNA terminus and a 5'-phosphoryl group is left at the trailer molecule.. Functionally, zinc phosphodiesterase, which displays some tRNA 3'-processing endonuclease activity. Probably involved in tRNA maturation, by removing a 3'-trailer from precursor tRNA. The sequence is that of Ribonuclease Z from Thermobifida fusca (strain YX).